The following is a 250-amino-acid chain: Geranylgeranylglyceryl phosphate synthase (250 aa).

Mg(2+) is bound by residues Asp26 and Ser55. Sn-glycerol 1-phosphate contacts are provided by residues 174–180 (YLEAGSG), 205–206 (GG), and 227–228 (GT).

The protein belongs to the GGGP/HepGP synthase family. Group II subfamily. The cofactor is Mg(2+).

The protein localises to the cytoplasm. The catalysed reaction is sn-glycerol 1-phosphate + (2E,6E,10E)-geranylgeranyl diphosphate = sn-3-O-(geranylgeranyl)glycerol 1-phosphate + diphosphate. It participates in membrane lipid metabolism; glycerophospholipid metabolism. Functionally, prenyltransferase that catalyzes the transfer of the geranylgeranyl moiety of geranylgeranyl diphosphate (GGPP) to the C3 hydroxyl of sn-glycerol-1-phosphate (G1P). This reaction is the first ether-bond-formation step in the biosynthesis of archaeal membrane lipids. The sequence is that of Geranylgeranylglyceryl phosphate synthase from Nitrosopumilus maritimus (strain SCM1).